The sequence spans 157 residues: Transcription elongation factor GreA (157 aa).

The protein belongs to the GreA/GreB family.

Its function is as follows. Necessary for efficient RNA polymerase transcription elongation past template-encoded arresting sites. The arresting sites in DNA have the property of trapping a certain fraction of elongating RNA polymerases that pass through, resulting in locked ternary complexes. Cleavage of the nascent transcript by cleavage factors such as GreA or GreB allows the resumption of elongation from the new 3'terminus. GreA releases sequences of 2 to 3 nucleotides. In Caulobacter vibrioides (strain ATCC 19089 / CIP 103742 / CB 15) (Caulobacter crescentus), this protein is Transcription elongation factor GreA.